The sequence spans 236 residues: MRTPRRHCRRIAVLAAVSIAATVVAGCSSGSKPSGGPLPDAKPLVEEATAQTKALKSAHMVLTVNGKIPGLSLKTLSGDLTTNPTAATGNVKLTLGGSDIDADFVVFDGILYATLTPNQWSDFGPAADIYDPAQVLNPDTGLANVLANFADAKAEGRDTINGQNTIRISGKVSAQAVNQIAPPFNATQPVPATVWIQETGDHQLAQAQLDRGSGNSVQMTLSKWGEKVQVTKPPVS.

The N-terminal stretch at 1 to 26 (MRTPRRHCRRIAVLAAVSIAATVVAG) is a signal peptide. Cys27 carries the N-palmitoyl cysteine lipid modification. Cys27 is lipidated: S-diacylglycerol cysteine.

The protein belongs to the LppX/LprAFG lipoprotein family. Post-translationally, modified by Lgt on Cys-27 with an S-linked diacylglyceral, signal peptide is removed by LspA, Cys-27 is further modifed with a fatty acid on its amino group by Lnt yielding a triacylated protein.

The protein resides in the cell inner membrane. It localises to the secreted. It is found in the cell wall. Its function is as follows. Helps membrane protein Mb1445c (P55) transport triacylglycerides (TAG) across the inner cell membrane into the periplasm and probably ultimately to the outer membrane. Binds TAG in its hydrophobic cavity and transfers it between lipid bilayers. TAG probably regulates lipid metabolism and growth regulation and plays a structural role in the outer membrane. Binds di- and triacylated phosphatidyl-myo-inositol mannosides (PIMs), and glycolipid lipoglycan modulins lipoarabinomannan (LAM) and lipomannan (LM), facilitating their recognition by TLR2. Required for activity of drug efflux transporter Mb1445c. Required, probably with Mb1445c, for normal surface localization of LAM. Constitutes a host TLR2 agonist (toll-like receptor). This is Lipoarabinomannan carrier protein LprG from Mycobacterium bovis (strain ATCC BAA-935 / AF2122/97).